Reading from the N-terminus, the 436-residue chain is Serine hydroxymethyltransferase (436 aa).

Residues Leu120 and 124-126 each bind (6S)-5,6,7,8-tetrahydrofolate; that span reads GHL. Residue Lys229 is modified to N6-(pyridoxal phosphate)lysine.

This sequence belongs to the SHMT family. As to quaternary structure, homodimer. It depends on pyridoxal 5'-phosphate as a cofactor.

It is found in the cytoplasm. It catalyses the reaction (6R)-5,10-methylene-5,6,7,8-tetrahydrofolate + glycine + H2O = (6S)-5,6,7,8-tetrahydrofolate + L-serine. The protein operates within one-carbon metabolism; tetrahydrofolate interconversion. It participates in amino-acid biosynthesis; glycine biosynthesis; glycine from L-serine: step 1/1. Its function is as follows. Catalyzes the reversible interconversion of serine and glycine with tetrahydrofolate (THF) serving as the one-carbon carrier. This reaction serves as the major source of one-carbon groups required for the biosynthesis of purines, thymidylate, methionine, and other important biomolecules. Also exhibits THF-independent aldolase activity toward beta-hydroxyamino acids, producing glycine and aldehydes, via a retro-aldol mechanism. This chain is Serine hydroxymethyltransferase, found in Roseiflexus castenholzii (strain DSM 13941 / HLO8).